The following is a 967-amino-acid chain: RNA polymerase II C-terminal domain phosphatase-like 1 (967 aa).

Positions 38-41 (RKKK) match the Nuclear localization signal (NLS) motif. An FCP1 homology domain is found at 151 to 401 (LNLRCLGIVF…TPVLCVARNV (251 aa)). Disordered stretches follow at residues 548-611 (SEPS…VQSR) and 643-712 (MEKH…RNSD). Over residues 590–603 (PSEPSFPQRPPVQA) the composition is skewed to pro residues. Basic and acidic residues predominate over residues 665 to 684 (RMLHENRRPPKESLRRDEQL). DRBM domains follow at residues 724 to 792 (TETS…NLAD) and 855 to 925 (GSIT…SVRS). Residues 928–967 (GQPLHKRQGSPRSFGGMSNKRLKPDFQRSLQRMPSSGRYS) are disordered. The required for nuclear localization (NLS) stretch occupies residues 945–967 (SNKRLKPDFQRSLQRMPSSGRYS). The Nuclear localization signal (NLS) signature appears at 947 to 951 (KRLKP). Polar residues predominate over residues 955-967 (RSLQRMPSSGRYS).

In terms of assembly, interacts with FREE1, ANAC019, MYB3, MYB4 and MYB32. Binds to DMS3. Interacts with RCF3. Interacts with RS40 and RS41. Interacts with EIF4A3. Interacts with UPF3. Mg(2+) serves as cofactor. The cofactor is Co(2+). Mn(2+) is required as a cofactor. In terms of tissue distribution, expressed at very low levels in roots, leaves, stems, flowers and siliques.

It localises to the nucleus. The protein localises to the nucleus speckle. It catalyses the reaction O-phospho-L-seryl-[protein] + H2O = L-seryl-[protein] + phosphate. The catalysed reaction is O-phospho-L-threonyl-[protein] + H2O = L-threonyl-[protein] + phosphate. Processively dephosphorylates 'Ser-5' but not 'Ser-2' of the heptad repeats YSPTSPS in the C-terminal domain of the largest RNA polymerase II subunit (RPB1). This promotes the activity of RNA polymerase II. Together with CPL2, required for male gametes fertility. Multifunctional regulator that modulates plant growth, stress, and phytohormones responses. Negative regulator of stress gene transcription involved in abscisic acid (ABA) mediated and jasmonic acid (JA) mediated signaling pathways, NaCl, osmotic stress, wounding, and cold resistance. Negatively regulates the expression of jasmonic acid (JA) biosynthetic genes in response to wounding. Forms a complex with RCF3 that modulates co-transcriptional processes such as mRNA capping and polyadenylation, and functions to repress stress-inducible gene expression. Dephosphorylates RCF3. Involved in the dephosphorylation of EIF4A3. This dephosphorylation retains EIF4A3 in the nucleus and limits its accumulation in the cytoplasm. Is essential for the degradation of the nonsense-mediated mRNA decay (NMD) transcripts. This chain is RNA polymerase II C-terminal domain phosphatase-like 1, found in Arabidopsis thaliana (Mouse-ear cress).